The sequence spans 101 residues: Signal recognition particle 19 kDa protein (101 aa).

It belongs to the SRP19 family. Part of the signal recognition particle protein translocation system, which is composed of SRP and FtsY. Archaeal SRP consists of a 7S RNA molecule of 300 nucleotides and two protein subunits: SRP54 and SRP19.

The protein resides in the cytoplasm. Functionally, involved in targeting and insertion of nascent membrane proteins into the cytoplasmic membrane. Binds directly to 7S RNA and mediates binding of the 54 kDa subunit of the SRP. The polypeptide is Signal recognition particle 19 kDa protein (Methanosarcina acetivorans (strain ATCC 35395 / DSM 2834 / JCM 12185 / C2A)).